Consider the following 1574-residue polypeptide: Sterol 3-beta-glucosyltransferase (1574 aa).

Residues 37-48 (TFLNQNPASPNN) are compositionally biased toward polar residues. Disordered stretches follow at residues 37–61 (TFLN…NKDE) and 102–170 (ASNA…HSKL). 2 stretches are compositionally biased toward basic and acidic residues: residues 107–121 (EAKD…RSSR) and 128–138 (PEYRREYKLDY). Acidic residues predominate over residues 139-148 (DIDESEEDDI). A compositionally biased stretch (basic and acidic residues) spans 149 to 170 (ESTRDENTLKPKTEDTSVHSKL). The GRAM 1 domain occupies 253-288 (DKLKRVFELNDDDYFYGNYNVWLVRDVLLQGHIYLT). The region spanning 323–471 (DVIQSGSLGM…WVNNIVKVVF (149 aa)) is the PH domain. 4 disordered regions span residues 389–413 (GRND…SGDE), 538–559 (RMKK…GNEP), 651–722 (ASHR…PVQG), and 774–806 (DALS…KKKN). The span at 692–701 (ITPSKIFSNK) shows a compositional bias: polar residues. Positions 702 to 711 (SRTESEKSTP) are enriched in basic and acidic residues. Polar residues predominate over residues 712-722 (DRSQTTSPVQG). The GRAM 2 domain maps to 854–920 (RHFQERFSFN…IDVDTCSKEK (67 aa)). Over residues 964-976 (RESGNESSDDNKS) the composition is skewed to basic and acidic residues. Residues 964–996 (RESGNESSDDNKSAQHGKSGCFQKTPSSAETTK) are disordered. The span at 985–996 (FQKTPSSAETTK) shows a compositional bias: polar residues. UDP-alpha-D-glucose is bound by residues S1057, R1058, D1060, N1333, I1364, H1366, H1379, S1382, G1383, T1384, D1403, and Q1404. The tract at residues 1505 to 1574 (DSDTYDADHD…DNTTVTDANK (70 aa)) is disordered. The segment covering 1510 to 1533 (DADHDSDKESDHDQTYEQDNHSDY) has biased composition (basic and acidic residues). A compositionally biased stretch (polar residues) spans 1563–1574 (GNDNTTVTDANK).

This sequence belongs to the glycosyltransferase 28 family.

Its subcellular location is the cytoplasm. It is found in the membrane. It carries out the reaction a sterol + UDP-alpha-D-glucose = a sterol 3-beta-D-glucoside + UDP + H(+). It catalyses the reaction ergosterol + UDP-alpha-D-glucose = ergosteryl 3-beta-D-glucoside + UDP + H(+). In terms of biological role, sterol glycosyltransferase responsible for the glycosylation of ergosterol to form ergosterol-glucoside. In Debaryomyces hansenii (strain ATCC 36239 / CBS 767 / BCRC 21394 / JCM 1990 / NBRC 0083 / IGC 2968) (Yeast), this protein is Sterol 3-beta-glucosyltransferase.